Reading from the N-terminus, the 716-residue chain is Zinc finger protein 840 (716 aa).

The KRAB domain maps to 42-113 (VRFRDVAVVF…EREVTGDPCP (72 aa)). C2H2-type zinc fingers lie at residues 151 to 173 (YECDDCGMAFGHVSQLTGHQKIH), 207 to 229 (FECNQCGETFNRPSKVIQHQSMH), 235 to 257 (YKCDVCQKAFRFLSSLSIHQRFH), 277 to 299 (FSCNFCGKTFHRFSEKTQHLLIH), 305 to 327 (YTCNYCKKEFNPYSKFILHQRTH), 333 to 355 (HKCDVCEKSFKSISNLNKHQKTH), 361 to 383 (FSCNECKKTFAQRTDLARHQQIH), 389 to 411 (FICSSCKKTFVRLSDLTQHKGTH), 417 to 439 (YQCTTCEKAFKYRSNFTKHQKTH), 445 to 467 (FACNECGKTYRLNWELNQHKKIH), 473 to 495 (YECGECGKRFNNNSNLNKHKKIH), 501 to 523 (FVCNQCGKAFSLNSKLSRHQRTH), 549 to 571 (FPCNECKKAFAQRMDLARHQQIH), 577 to 599 (FICSSCKKTFVRLSDLTQHKGTH), 605 to 627 (YQCTTCEKAFKYQSNFTKHQKTH), 633 to 655 (FTCNECGKTFRLNWKLNQHKKIH), 661 to 683 (YECGECGKCFNNNSNLSKHKKIH), and 689 to 711 (FVCNQCGKAFSLNSKLSRHQITH). The interval 515-548 (KLSRHQRTHNKKENSSKSVSNLNKHQKTHAGEKP) is disordered.

This sequence belongs to the krueppel C2H2-type zinc-finger protein family.

It is found in the nucleus. In terms of biological role, may be involved in transcriptional regulation. The sequence is that of Zinc finger protein 840 (ZNF840P) from Homo sapiens (Human).